The chain runs to 90 residues: Darcynin 1 (90 aa).

This sequence belongs to the darcynin family.

The chain is Darcynin 1 from Acinetobacter baumannii (strain ATCC 17978 / DSM 105126 / CIP 53.77 / LMG 1025 / NCDC KC755 / 5377).